A 234-amino-acid polypeptide reads, in one-letter code: HTH-type transcriptional regulator ArcR (234 aa).

40–129 (VRHYTKGQVI…MAFLCKANDD (90 aa)) lines the a nucleoside 3',5'-cyclic phosphate pocket. In terms of domain architecture, HTH crp-type spans 155–228 (KFAKDRIIKL…HKNWLVSKHL (74 aa)). Positions 188-207 (IQLMSDMAGISRETAGHIIH) form a DNA-binding region, H-T-H motif.

Its subcellular location is the cytoplasm. Positively regulates the expression of the arcABDCR operon under anaerobic conditions, thus playing an essential role in arginine catabolism. May also control the expression of genes encoding proteins which are involved in anaerobic metabolism. Can bind cyclic AMP. In Staphylococcus aureus (strain Mu50 / ATCC 700699), this protein is HTH-type transcriptional regulator ArcR (arcR).